The primary structure comprises 624 residues: Actin-related protein 8 (624 aa).

N-acetylmethionine is present on Met1. Over residues 1–25 (MTQAEKGDAENGKEKGGEKEKEQRG) the composition is skewed to basic and acidic residues. The segment at 1 to 29 (MTQAEKGDAENGKEKGGEKEKEQRGVKRP) is disordered. ATP contacts are provided by Ser55 and Thr56. Ser132 carries the phosphoserine modification. 283–286 (DVGD) lines the ATP pocket. Ser412 carries the post-translational modification Phosphoserine. The segment at 430-462 (SKQEQSAKATADRKSASKPIGFEGDLRGQSSDL) is disordered.

Belongs to the actin family. ARP8 subfamily. As to quaternary structure, component of the chromatin remodeling INO80 complex; specifically part of a complex module associated with the DBINO domain of INO80. Exists as monomers and dimers, but the dimer is most probably the biologically relevant form required for stable interactions with histones that exploits the twofold symmetry of the nucleosome core.

The protein resides in the nucleus. Its subcellular location is the chromosome. Plays an important role in the functional organization of mitotic chromosomes. Exhibits low basal ATPase activity, and unable to polymerize. Functionally, proposed core component of the chromatin remodeling INO80 complex which is involved in transcriptional regulation, DNA replication and probably DNA repair. Required for the recruitment of INO80 (and probably the INO80 complex) to sites of DNA damage Strongly prefer nucleosomes and H3-H4 tetramers over H2A-H2B dimers, suggesting it may act as a nucleosome recognition module within the complex. This chain is Actin-related protein 8 (Actr8), found in Mus musculus (Mouse).